The following is a 206-amino-acid chain: Enterobactin synthase component D (206 aa).

Aspartate 107, glutamate 109, and glutamate 152 together coordinate Mg(2+).

This sequence belongs to the P-Pant transferase superfamily. EntD family. In terms of assembly, entB, EntD, EntE, and EntF form a multienzyme complex called enterobactin synthase. Mg(2+) is required as a cofactor.

It is found in the membrane. The enzyme catalyses apo-[aryl-carrier protein] + CoA = holo-[aryl-carrier protein] + adenosine 3',5'-bisphosphate + H(+). It carries out the reaction apo-[peptidyl-carrier protein] + CoA = holo-[peptidyl-carrier protein] + adenosine 3',5'-bisphosphate + H(+). It participates in siderophore biosynthesis; enterobactin biosynthesis. In terms of biological role, involved in the biosynthesis of the siderophore enterobactin (enterochelin), which is a macrocyclic trimeric lactone of N-(2,3-dihydroxybenzoyl)-serine. The serine trilactone serves as a scaffolding for the three catechol functionalities that provide hexadentate coordination for the tightly ligated iron(2+) atoms. Plays an essential role in the assembly of the enterobactin by catalyzing the transfer of the 4'-phosphopantetheine (Ppant) moiety from coenzyme A to the apo-domains of both EntB (ArCP domain) and EntF (PCP domain) to yield their holo-forms which make them competent for the activation of 2,3-dihydroxybenzoate (DHB) and L-serine, respectively. In Escherichia coli (strain K12), this protein is Enterobactin synthase component D.